Here is a 1215-residue protein sequence, read N- to C-terminus: von Willebrand factor A domain-containing protein 5B1 (1215 aa).

The N-terminal stretch at 1-18 (MPGLLNCLTGAALPLMES) is a signal peptide. In terms of domain architecture, VIT spans 19-141 (DVTSYVSGYA…NVTVFISTSS (123 aa)). Asparagine 132 carries an N-linked (GlcNAc...) asparagine glycan. Positions 353-532 (EFIFLIDRSN…KAMAPVLSDV (180 aa)) constitute a VWFA domain. The tract at residues 595–674 (SVFYPSQDEG…DPTGTARRYP (80 aa)) is disordered. Polar residues-rich tracts occupy residues 608 to 621 (GSGN…QGQT) and 646 to 667 (YSTN…SDPT). Tyrosine 879 is modified (phosphotyrosine). Disordered stretches follow at residues 934–953 (GSSA…SSAA), 964–999 (QDSP…APSS), and 1100–1121 (SPQD…SLKS). Composition is skewed to polar residues over residues 964–975 (QDSPTSTFNKTP), 990–999 (QNLSASAPSS), and 1100–1112 (SPQD…SSPP).

It localises to the secreted. In Mus musculus (Mouse), this protein is von Willebrand factor A domain-containing protein 5B1 (Vwa5b1).